The following is a 356-amino-acid chain: Thiamine thiazole synthase, chloroplastic (356 aa).

Residues 1–51 (MAAMASTAFAPSVSSTTNKLFDSSFHGAPMSPSLLRLQPIKSSRPNNLSIS) constitute a chloroplast transit peptide. Substrate contacts are provided by residues A101, 121–122 (EQ), G129, and A194. 2,3-didehydroalanine (Cys) is present on C223. Substrate-binding positions include D225, H240, M292, and 302–304 (RMG).

Belongs to the THI4 family. In terms of assembly, homooctamer. Requires Fe cation as cofactor. Post-translationally, during the catalytic reaction, a sulfide is transferred from Cys-223 to a reaction intermediate, generating a dehydroalanine residue.

The protein localises to the plastid. Its subcellular location is the chloroplast. It catalyses the reaction [ADP-thiazole synthase]-L-cysteine + glycine + NAD(+) = [ADP-thiazole synthase]-dehydroalanine + ADP-5-ethyl-4-methylthiazole-2-carboxylate + nicotinamide + 3 H2O + 2 H(+). In terms of biological role, involved in biosynthesis of the thiamine precursor thiazole. Catalyzes the conversion of NAD and glycine to adenosine diphosphate 5-(2-hydroxyethyl)-4-methylthiazole-2-carboxylic acid (ADT), an adenylated thiazole intermediate. The reaction includes an iron-dependent sulfide transfer from a conserved cysteine residue of the protein to a thiazole intermediate. The enzyme can only undergo a single turnover, which suggests it is a suicide enzyme. May have additional roles in adaptation to various stress conditions and in DNA damage tolerance. This chain is Thiamine thiazole synthase, chloroplastic, found in Citrus sinensis (Sweet orange).